Consider the following 892-residue polypeptide: Smad protein daf-3 (892 aa).

2 disordered regions span residues Met-1–Asp-43 and Pro-135–Lys-161. The span at Ile-15–Thr-26 shows a compositional bias: polar residues. An MH1 domain is found at Lys-198 to Val-347. The segment at Tyr-505–Leu-552 is disordered. Positions Ser-528 to Gln-540 are enriched in low complexity. One can recognise an MH2 domain in the interval Trp-657–Glu-880.

Belongs to the dwarfin/SMAD family. As to quaternary structure, interacts with R-SMADs daf-8 and daf-14. Interacts with daf-14 in a daf-8 dependent manner. May interact with daf-5.

It is found in the cytoplasm. Its subcellular location is the nucleus. The protein localises to the chromosome. Its function is as follows. Transcriptional regulator and common SMAD (co-SMAD), required to regulate entry into a developmentally arrested larval state known as dauer, in response to harsh environmental conditions. Probable component of transcriptional regulatory complex with SMAD protein daf-5. Acts antagonistically to SMAD signaling downstream of TGF-beta-like daf-7 signaling. Binds to the 5'-GTCTG-3' motif found in regulatory regions and may modulate the expression of genes involved in TGF-beta-like daf-7 and Notch lag-2 signaling. May regulate gene expression outside the dauer pathway. This Caenorhabditis elegans protein is Smad protein daf-3.